An 89-amino-acid chain; its full sequence is Small ribosomal subunit protein uS15 (89 aa).

Belongs to the universal ribosomal protein uS15 family. As to quaternary structure, part of the 30S ribosomal subunit. Forms a bridge to the 50S subunit in the 70S ribosome, contacting the 23S rRNA.

One of the primary rRNA binding proteins, it binds directly to 16S rRNA where it helps nucleate assembly of the platform of the 30S subunit by binding and bridging several RNA helices of the 16S rRNA. In terms of biological role, forms an intersubunit bridge (bridge B4) with the 23S rRNA of the 50S subunit in the ribosome. The sequence is that of Small ribosomal subunit protein uS15 from Beutenbergia cavernae (strain ATCC BAA-8 / DSM 12333 / CCUG 43141 / JCM 11478 / NBRC 16432 / NCIMB 13614 / HKI 0122).